Reading from the N-terminus, the 600-residue chain is Arginine--tRNA ligase (600 aa).

Residues 151 to 153, H162, Y332, D336, and Q360 each bind L-arginine; that span reads SPN. Residues 152–162 carry the 'HIGH' region motif; it reads PNIAKEMHIGH.

This sequence belongs to the class-I aminoacyl-tRNA synthetase family.

The enzyme catalyses tRNA(Arg) + L-arginine + ATP = L-arginyl-tRNA(Arg) + AMP + diphosphate. This Acanthamoeba polyphaga mimivirus (APMV) protein is Arginine--tRNA ligase (RARS).